The sequence spans 218 residues: MKMIEQHNQEYREGKHSFTMAMNAFGEMTSEEFRQVVNGFQNQKHRKGKVLQEPLLHDIRKSVDWREKGYVTPVKDQCNWGSVRTDVRKTEKLVSLSVQTWWTALGFKAMLAAFLENHYFASSMLPTMEAWTLRKPFHMKKSSGDWKVQGHRGASGESLLASGESQQSPEVAQYSGKHQVQCHLIEEALQMLSGGDEDHDEDKWPHDMRNHLAGEAQV.

Disordered stretches follow at residues 144 to 173 and 195 to 218; these read GDWK…EVAQ and GDED…EAQV. A compositionally biased stretch (basic and acidic residues) spans 201-212; that stretch reads EDKWPHDMRNHL.

The protein belongs to the peptidase C1 family.

In Homo sapiens (Human), this protein is Putative inactive cathepsin L-like protein CTSL3P (CTSL3P).